Here is a 278-residue protein sequence, read N- to C-terminus: 4-hydroxy-tetrahydrodipicolinate reductase (278 aa).

NAD(+) is bound by residues 13 to 18 and 111 to 113; these read GAAGKM and GTT. The active-site Proton donor/acceptor is histidine 167. Histidine 168 serves as a coordination point for (S)-2,3,4,5-tetrahydrodipicolinate. Lysine 171 acts as the Proton donor in catalysis. Residue 177–178 participates in (S)-2,3,4,5-tetrahydrodipicolinate binding; sequence GT.

It belongs to the DapB family.

Its subcellular location is the cytoplasm. The catalysed reaction is (S)-2,3,4,5-tetrahydrodipicolinate + NAD(+) + H2O = (2S,4S)-4-hydroxy-2,3,4,5-tetrahydrodipicolinate + NADH + H(+). The enzyme catalyses (S)-2,3,4,5-tetrahydrodipicolinate + NADP(+) + H2O = (2S,4S)-4-hydroxy-2,3,4,5-tetrahydrodipicolinate + NADPH + H(+). Its pathway is amino-acid biosynthesis; L-lysine biosynthesis via DAP pathway; (S)-tetrahydrodipicolinate from L-aspartate: step 4/4. Catalyzes the conversion of 4-hydroxy-tetrahydrodipicolinate (HTPA) to tetrahydrodipicolinate. This chain is 4-hydroxy-tetrahydrodipicolinate reductase, found in Trichormus variabilis (strain ATCC 29413 / PCC 7937) (Anabaena variabilis).